The primary structure comprises 128 residues: Transcription antitermination protein NusB (128 aa).

It belongs to the NusB family.

Its function is as follows. Involved in transcription antitermination. Required for transcription of ribosomal RNA (rRNA) genes. Binds specifically to the boxA antiterminator sequence of the ribosomal RNA (rrn) operons. This is Transcription antitermination protein NusB from Listeria welshimeri serovar 6b (strain ATCC 35897 / DSM 20650 / CCUG 15529 / CIP 8149 / NCTC 11857 / SLCC 5334 / V8).